The sequence spans 363 residues: MSNELKKTPLYQTFVDSGAKIVEFGGWAMPVQFSSIKEEHNAVRTEMGLFDVSHMGEIIIKGSDASNLVQYLLSNDTDNVTTHKAQYTALCNEQGGIIDDLITYKLEENVYLLVVNAGNTEKDFEWMYEKAKAFDAEVINVSTEYGQLAIQGPKARDLVQQYVNIDVSEMKPFEFEQNVEFFGKNVILSQSGYTGEDGFEIYCNADDAPYLWDEILKNDVTPCGLGARDTLRLEAGLPLHGQDLSETITPYEAGIAFAAKPLIEADFIGKSVLKDQKENGSKRRTVGLEMIDKGIPRTGYEVYDLDGNQIGEITSGTQSPLTGKSIGLALINRDAFEMGKEVVVQVRKRQVKAKIVKKNQISK.

This sequence belongs to the GcvT family. The glycine cleavage system is composed of four proteins: P, T, L and H.

It carries out the reaction N(6)-[(R)-S(8)-aminomethyldihydrolipoyl]-L-lysyl-[protein] + (6S)-5,6,7,8-tetrahydrofolate = N(6)-[(R)-dihydrolipoyl]-L-lysyl-[protein] + (6R)-5,10-methylene-5,6,7,8-tetrahydrofolate + NH4(+). Its function is as follows. The glycine cleavage system catalyzes the degradation of glycine. The sequence is that of Aminomethyltransferase from Staphylococcus saprophyticus subsp. saprophyticus (strain ATCC 15305 / DSM 20229 / NCIMB 8711 / NCTC 7292 / S-41).